The following is a 1319-amino-acid chain: DNA (cytosine-5)-methyltransferase CMT2 (1319 aa).

Over residues 1–15 (METPPPDPVSPPPPA) the composition is skewed to pro residues. Disordered stretches follow at residues 1–34 (METP…GGFS), 142–189 (ALDS…VASS), 265–302 (SAAS…KLPA), and 442–468 (KSRV…RART). A compositionally biased stretch (polar residues) spans 266–279 (AASSMPLNQNGDSS). Residues 285–296 (RVADSRKSRSSE) show a composition bias toward basic and acidic residues. Residues 602–719 (YTFCIGECAF…IDYSTFSTIE (118 aa)) enclose the BAH domain. The 539-residue stretch at 758-1296 (LSLLDLYCGC…YALAMAYLKK (539 aa)) folds into the SAM-dependent MTase C5-type domain. Residues 863-928 (FEVWKLVDIC…EGHRQRILPR (66 aa)) enclose the Chromo domain. Cys-941 is an active-site residue.

It localises to the nucleus. It catalyses the reaction a 2'-deoxycytidine in DNA + S-adenosyl-L-methionine = a 5-methyl-2'-deoxycytidine in DNA + S-adenosyl-L-homocysteine + H(+). Involved in CpXpG DNA methylation. This Oryza sativa subsp. japonica (Rice) protein is DNA (cytosine-5)-methyltransferase CMT2.